Consider the following 274-residue polypeptide: Kit ligand (274 aa).

The first 25 residues, methionine 1 to threonine 25, serve as a signal peptide directing secretion. The Extracellular segment spans residues lysine 26–glutamine 215. 2 disulfides stabilise this stretch: cysteine 29/cysteine 114 and cysteine 68/cysteine 164. N-linked (GlcNAc...) asparagine glycans are attached at residues asparagine 90, asparagine 97, asparagine 145, and asparagine 196. The chain crosses the membrane as a helical span at residues tryptophan 216–tryptophan 238. Residues lysine 239–valine 274 are Cytoplasmic-facing.

The protein belongs to the SCF family. Homodimer, non-covalently linked. Heterotetramer with KIT, binding two KIT molecules; thereby mediates KIT dimerization and subsequent activation by autophosphorylation. A soluble form is produced by proteolytic processing of isoform 1 in the extracellular domain.

It localises to the cytoplasm. Its subcellular location is the cytoskeleton. It is found in the cell membrane. The protein localises to the cell projection. The protein resides in the lamellipodium. It localises to the filopodium. Its subcellular location is the secreted. Its function is as follows. Ligand for the receptor-type protein-tyrosine kinase KIT. Plays an essential role in the regulation of cell survival and proliferation, hematopoiesis, stem cell maintenance, gametogenesis, mast cell development, migration and function, and in melanogenesis. KITLG/SCF binding can activate several signaling pathways. Promotes phosphorylation of PIK3R1, the regulatory subunit of phosphatidylinositol 3-kinase, and subsequent activation of the kinase AKT1. KITLG/SCF and KIT also transmit signals via GRB2 and activation of RAS, RAF1 and the MAP kinases MAPK1/ERK2 and/or MAPK3/ERK1. KITLG/SCF and KIT promote activation of STAT family members STAT1, STAT3 and STAT5. KITLG/SCF and KIT promote activation of PLCG1, leading to the production of the cellular signaling molecules diacylglycerol and inositol 1,4,5-trisphosphate. KITLG/SCF acts synergistically with other cytokines, probably interleukins. The sequence is that of Kit ligand (KITLG) from Neovison vison (American mink).